The primary structure comprises 323 residues: tRNA U34 carboxymethyltransferase (323 aa).

Carboxy-S-adenosyl-L-methionine is bound by residues Lys93, Trp107, Lys112, Gly132, 154-156 (DPS), 182-183 (VE), Met197, Tyr201, and Arg316.

The protein belongs to the class I-like SAM-binding methyltransferase superfamily. CmoB family. In terms of assembly, homotetramer.

It catalyses the reaction carboxy-S-adenosyl-L-methionine + 5-hydroxyuridine(34) in tRNA = 5-carboxymethoxyuridine(34) in tRNA + S-adenosyl-L-homocysteine + H(+). In terms of biological role, catalyzes carboxymethyl transfer from carboxy-S-adenosyl-L-methionine (Cx-SAM) to 5-hydroxyuridine (ho5U) to form 5-carboxymethoxyuridine (cmo5U) at position 34 in tRNAs. This chain is tRNA U34 carboxymethyltransferase, found in Pseudoalteromonas atlantica (strain T6c / ATCC BAA-1087).